A 352-amino-acid chain; its full sequence is UDP-N-acetylglucosamine--N-acetylmuramyl-(pentapeptide) pyrophosphoryl-undecaprenol N-acetylglucosamine transferase (352 aa).

Residues S195 and Q287 each coordinate UDP-N-acetyl-alpha-D-glucosamine.

The protein belongs to the glycosyltransferase 28 family. MurG subfamily.

It is found in the cell membrane. The catalysed reaction is Mur2Ac(oyl-L-Ala-gamma-D-Glu-L-Lys-D-Ala-D-Ala)-di-trans,octa-cis-undecaprenyl diphosphate + UDP-N-acetyl-alpha-D-glucosamine = beta-D-GlcNAc-(1-&gt;4)-Mur2Ac(oyl-L-Ala-gamma-D-Glu-L-Lys-D-Ala-D-Ala)-di-trans,octa-cis-undecaprenyl diphosphate + UDP + H(+). Its pathway is cell wall biogenesis; peptidoglycan biosynthesis. Functionally, cell wall formation. Catalyzes the transfer of a GlcNAc subunit on undecaprenyl-pyrophosphoryl-MurNAc-pentapeptide (lipid intermediate I) to form undecaprenyl-pyrophosphoryl-MurNAc-(pentapeptide)GlcNAc (lipid intermediate II). This is UDP-N-acetylglucosamine--N-acetylmuramyl-(pentapeptide) pyrophosphoryl-undecaprenol N-acetylglucosamine transferase from Streptococcus pneumoniae (strain JJA).